Reading from the N-terminus, the 326-residue chain is Probable magnesium transporter NIPA7 (326 aa).

The Extracellular segment spans residues 1–4 (MVSD). The chain crosses the membrane as a helical span at residues 5–25 (NEMGLVLAVSSSVFIGSSFIL). The Cytoplasmic portion of the chain corresponds to 26–51 (KKKGLKRAAANGTRAGFGGYTYLLEP). A helical membrane pass occupies residues 52 to 72 (LWWVGLVTMTFGEIANFVAYV). Residues 73 to 76 (YAPA) lie on the Extracellular side of the membrane. A helical membrane pass occupies residues 77–97 (VLVTPLGALSIIISAVLAHFL). The Cytoplasmic segment spans residues 98-104 (LDEKLRK). Residues 105–125 (MGVWGCVCCIVGSVMIVIHAP) form a helical membrane-spanning segment. Residues 126 to 142 (QEQTPNSVEEIWKLAMQ) lie on the Extracellular side of the membrane. The chain crosses the membrane as a helical span at residues 143–163 (PAFLIYVAISMSIVLALILYC). The Cytoplasmic segment spans residues 164-169 (EPLCGQ). The chain crosses the membrane as a helical span at residues 170–190 (TNILVYIGICSLMGSLTVMSI). The Extracellular portion of the chain corresponds to 191–209 (KAVGIAIKLTFEGINQIWY). Residues 210 to 230 (PETWFFAMVAAICVVMQMIYL) traverse the membrane as a helical segment. At 231–240 (NKALDTFNAA) the chain is on the cytoplasmic side. Residues 241 to 261 (IVSPIYYVMFTTLTIVASAIM) traverse the membrane as a helical segment. The Extracellular segment spans residues 262-272 (FKDWNGQNTDS). A helical transmembrane segment spans residues 273-293 (IASEICGFITVLTGTVILHST). Residues 294 to 326 (REEEQASPRRMRWQDSGKSFDEEHLTSLYSPEY) lie on the Cytoplasmic side of the membrane.

Belongs to the NIPA (TC 2.A.7) family. As to quaternary structure, homodimer.

The protein resides in the cell membrane. It is found in the early endosome. Acts as a Mg(2+) transporter. Can also transport other divalent cations such as Fe(2+), Sr(2+), Ba(2+), Mn(2+) and Co(2+) but to a much less extent than Mg(2+). The sequence is that of Probable magnesium transporter NIPA7 from Arabidopsis thaliana (Mouse-ear cress).